The primary structure comprises 516 residues: Putative GTP-binding protein 6 (516 aa).

A compositionally biased stretch (low complexity) spans glycine 18 to valine 39. Residues glycine 18–glutamate 82 are disordered. Over residues leucine 57–glycine 67 the composition is skewed to basic and acidic residues. Positions aspartate 68–glutamate 82 are enriched in acidic residues. The Hflx-type G domain maps to proline 295 to threonine 459. Residues glycine 301 to threonine 308, phenylalanine 327 to aspartate 331, aspartate 349 to glycine 352, asparagine 418 to aspartate 421, and serine 437 to leucine 439 each bind GTP. Mg(2+)-binding residues include threonine 308 and threonine 329.

This sequence belongs to the TRAFAC class OBG-HflX-like GTPase superfamily. HflX GTPase family. Mg(2+) is required as a cofactor. As to expression, ubiquitously expressed.

The polypeptide is Putative GTP-binding protein 6 (GTPBP6) (Homo sapiens (Human)).